Here is a 90-residue protein sequence, read N- to C-terminus: MAVKIRLTRMGSKKKPFYRINVADSRAPRDGRFIETVGTYNPLVAENQVTLKEDRVLDWLGKGAQPSDTVRSLLSKAGVMAKFHDQKFSK.

Belongs to the bacterial ribosomal protein bS16 family.

In Streptococcus equi subsp. zooepidemicus (strain H70), this protein is Small ribosomal subunit protein bS16.